We begin with the raw amino-acid sequence, 633 residues long: Carbon catabolite-derepressing protein kinase (633 aa).

The span at 1-16 (MSSNNNTNTAPANANS) shows a compositional bias: low complexity. Residues 1–46 (MSSNNNTNTAPANANSSHHHHHHHHHHHHHGHGGSNSTLNNPKSSL) form a disordered region. Positions 17-32 (SHHHHHHHHHHHHHGH) are enriched in basic residues. Residues 55 to 306 (YQIVKTLGEG…IHEIMQDDWF (252 aa)) enclose the Protein kinase domain. ATP-binding positions include 61-69 (LGEGSFGKV) and Lys84. The Proton acceptor role is filled by Asp177. At Thr210 the chain carries Phosphothreonine; by autocatalysis. Positions 313 to 392 (YLLPPDLKPH…YMLIKENKSL (80 aa)) are auto-inhibitory domain (AID). A disordered region spans residues 317–345 (PDLKPHPEEENENNDSKKDGSSPDNDEID). Residues 319 to 337 (LKPHPEEENENNDSKKDGS) show a composition bias toward basic and acidic residues. The region spanning 348 to 389 (LVNILSSTMGYEKDEIYESLESSEDTPAFNEIRDAYMLIKEN) is the UBA domain. Residues 409–434 (FLSQSPPTFQQQSKSHQKSQVDHETA) form a disordered region. At Ser413 the chain carries Phosphoserine. Residue Lys461 forms a Glycyl lysine isopeptide (Lys-Gly) (interchain with G-Cter in ubiquitin) linkage. A Phosphoserine modification is found at Ser487. Lys549 participates in a covalent cross-link: Glycyl lysine isopeptide (Lys-Gly) (interchain with G-Cter in SUMO). Ser632 is subject to Phosphoserine.

The protein belongs to the protein kinase superfamily. CAMK Ser/Thr protein kinase family. SNF1 subfamily. In terms of assembly, component of the AMP-activated protein kinase complex also known as the SNF1 kinase complex (Snf1c), a heterotrimeric complex composed of an alpha subunit (SNF1), a regulatory subunit beta (GAL83 and substoichiometric alternate beta subunits SIP1 and SIP2), and a regulatory subunit gamma (SNF4). Interacts with the transcriptional activator SIP4. Interacts with SAK1. Interacts with CTK1: Interacts with adenylate cyclase CYR1. Post-translationally, phosphorylation at Thr-210 in response to glucose limitation leads to activation of kinase activity. ADP, but not AMP, protects the enzyme from dephosphorylation at Thr-210 by GLC7. Sumoylation by the SUMO (E3) ligase MMS21 leads to inhibition by interaction of SUMO attached to Lys-549 with a SUMO-interacting sequence motif located near the active site of SNF1, and by targeting SNF1 for glucose-induced destruction via the SLX5-SLX8 (SUMO-directed) ubiquitin ligase.

It is found in the cytoplasm. The protein resides in the nucleus. The protein localises to the nucleus membrane. The enzyme catalyses L-seryl-[protein] + ATP = O-phospho-L-seryl-[protein] + ADP + H(+). It carries out the reaction L-threonyl-[protein] + ATP = O-phospho-L-threonyl-[protein] + ADP + H(+). The kinase activity is positively regulated by SNF4 via sequestration of the SNF1 auto-inhibitory domain (AID). Functionally, serine/threonine protein kinase essential for release from glucose repression. Catalytic subunit of the AMP-activated protein kinase complex also known as the SNF1 kinase complex (Snf1c), a central regulator of cellular energy homeostasis, which, in response to a fall in intracellular ATP levels, activates energy-producing pathways and inhibits energy-consuming processes. The complex phosphorylates histone H3 to form H3S10ph, which promotes H3K14ac formation, leading to transcriptional activation through TBP recruitment to the promoters. The complex also negatively regulates the HOG1 MAPK pathway in ER stress response including unfolded protein response (UPR). Under nutrient/energy depletion, the complex phosphorylates and activates PAS kinase PSK1 which in turn activates PBS1, leading to the inhibition of the TORC1 signaling pathway. SNF1 also interacts and phosphorylates adenylate cyclase CYR1 and negatively regulates the protein kinase A signaling pathway. Also phosphorylates and regulates the transcriptional activator CAT8. The polypeptide is Carbon catabolite-derepressing protein kinase (Saccharomyces cerevisiae (strain ATCC 204508 / S288c) (Baker's yeast)).